The chain runs to 451 residues: Ribulose bisphosphate carboxylase large chain (451 aa).

N6,N6,N6-trimethyllysine is present on Lys5. Residues Asn114 and Thr164 each contribute to the substrate site. Lys166 functions as the Proton acceptor in the catalytic mechanism. Lys168 provides a ligand contact to substrate. 3 residues coordinate Mg(2+): Lys192, Asp194, and Glu195. Lys192 carries the post-translational modification N6-carboxylysine. Catalysis depends on His285, which acts as the Proton acceptor. Positions 286, 318, and 370 each coordinate substrate.

The protein belongs to the RuBisCO large chain family. Type I subfamily. Heterohexadecamer of 8 large chains and 8 small chains; disulfide-linked. The disulfide link is formed within the large subunit homodimers. Mg(2+) serves as cofactor. In terms of processing, the disulfide bond which can form in the large chain dimeric partners within the hexadecamer appears to be associated with oxidative stress and protein turnover.

It is found in the plastid. It localises to the chloroplast. It carries out the reaction 2 (2R)-3-phosphoglycerate + 2 H(+) = D-ribulose 1,5-bisphosphate + CO2 + H2O. The enzyme catalyses D-ribulose 1,5-bisphosphate + O2 = 2-phosphoglycolate + (2R)-3-phosphoglycerate + 2 H(+). Functionally, ruBisCO catalyzes two reactions: the carboxylation of D-ribulose 1,5-bisphosphate, the primary event in carbon dioxide fixation, as well as the oxidative fragmentation of the pentose substrate in the photorespiration process. Both reactions occur simultaneously and in competition at the same active site. This Aristea glauca protein is Ribulose bisphosphate carboxylase large chain.